The sequence spans 343 residues: Farnesyl pyrophosphate synthase (343 aa).

3 residues coordinate isopentenyl diphosphate: Lys49, Arg52, and Gln87. Residues Asp94 and Asp98 each coordinate Mg(2+). Arg103 contacts dimethylallyl diphosphate. Arg104 contacts isopentenyl diphosphate. Dimethylallyl diphosphate is bound by residues Lys191, Thr192, Gln230, Lys247, and Lys256.

The protein belongs to the FPP/GGPP synthase family. Mg(2+) serves as cofactor. In terms of tissue distribution, expressed both in apical and sub-apical cells of glandular secretory trichomes.

It localises to the cytoplasm. Its subcellular location is the nucleus. It catalyses the reaction isopentenyl diphosphate + dimethylallyl diphosphate = (2E)-geranyl diphosphate + diphosphate. The catalysed reaction is isopentenyl diphosphate + (2E)-geranyl diphosphate = (2E,6E)-farnesyl diphosphate + diphosphate. It functions in the pathway isoprenoid biosynthesis; farnesyl diphosphate biosynthesis; farnesyl diphosphate from geranyl diphosphate and isopentenyl diphosphate: step 1/1. It participates in sesquiterpene biosynthesis. Its pathway is isoprenoid biosynthesis; geranyl diphosphate biosynthesis; geranyl diphosphate from dimethylallyl diphosphate and isopentenyl diphosphate: step 1/1. Functionally, involved in the biosynthesis of the antimalarial endoperoxide artemisinin. Catalyzes the sequential condensation of isopentenyl pyrophosphate with the allylic pyrophosphates, dimethylallyl pyrophosphate, and then with the resultant geranylpyrophosphate to the ultimate product farnesyl pyrophosphate. Promotes anti-malarial and antimicrobial (toward Gram-positive bacteria B.subtilis and S.aureus) activities of plant crude extract probably by triggering artemisinin levels. The chain is Farnesyl pyrophosphate synthase from Artemisia annua (Sweet wormwood).